We begin with the raw amino-acid sequence, 389 residues long: Alpha-(1,3)-fucosyltransferase 7 (389 aa).

The Cytoplasmic segment spans residues 1-55; it reads MPTPCPPACLSTPGTHRLLPFPDWKAPSWESRKEATCNSSSPGPWAEPTVQGYHP. The helical; Signal-anchor for type II membrane protein transmembrane segment at 56 to 78 threads the bilayer; that stretch reads TRRLRAWGGLAGGATFMVIWFFW. Topologically, residues 79-389 are lumenal; the sequence is LWGSAPGSAP…YEDLESWFQA (311 aa). Cys115 and Cys123 form a disulfide bridge. Asn128 carries N-linked (GlcNAc...) asparagine glycosylation. The cysteines at positions 258 and 261 are disulfide-linked. The N-linked (GlcNAc...) asparagine glycan is linked to Asn338. Cys365 and Cys368 are joined by a disulfide.

The protein belongs to the glycosyltransferase 10 family. Post-translationally, N-glycosylated. In terms of tissue distribution, highly expressed in lung and bone marrow and to a much lesser extent in spleen, salivary gland and skeletal muscle.

Its subcellular location is the golgi apparatus. The protein localises to the golgi stack membrane. It catalyses the reaction an N-acetyl-alpha-neuraminyl-(2-&gt;3)-beta-D-galactosyl-(1-&gt;4)-N-acetyl-beta-D-glucosaminyl derivative + GDP-beta-L-fucose = an alpha-Neu5Ac-(2-&gt;3)-beta-D-Gal-(1-&gt;4)-[alpha-L-Fuc-(1-&gt;3)]-beta-D-GlcNAc derivative + GDP + H(+). The catalysed reaction is an alpha-Neu5Ac-(2-&gt;3)-beta-D-Gal-(1-&gt;4)-beta-D-GlcNAc6S derivative + GDP-beta-L-fucose = an alpha-Neu5Ac-(2-&gt;3)-beta-D-Gal-(1-&gt;4)-[alpha-L-Fuc-(1-&gt;3)]-beta-D-GlcNAc6S derivative + GDP + H(+). The enzyme catalyses a neolactoside IV(3)-alpha-NeuAc-nLc4Cer + GDP-beta-L-fucose = a neolactoside IV(3)-alpha-NeuNAc,III(3)-alpha-Fuc-nLc4Cer + GDP + H(+). It carries out the reaction a neolactoside VI(3)-alpha-NeuNAc-nLc6Cer + GDP-beta-L-fucose = a neolactoside VI(3)-alpha-NeuAc,V(3)-alphaFuc-nLc6Cer + GDP + H(+). It catalyses the reaction an alpha-Neu5Ac-(2-&gt;3)-beta-D-Gal-(1-&gt;4)-beta-D-GlcNAc-(1-&gt;3)-beta-D-Gal-(1-&gt;4)-[alpha-L-Fuc-(1-&gt;3)]-beta-D-GlcNAc derivative + GDP-beta-L-fucose = an alpha-Neu5Ac-(2-&gt;3)-beta-D-Gal-(1-&gt;4)-[alpha-L-Fuc-(1-&gt;3)]-beta-D-GlcNAc-(1-&gt;3)-beta-D-Gal-(1-&gt;4)-[alpha-L-Fuc-(1-&gt;3)]-beta-D-GlcNAc derivative + GDP + H(+). The catalysed reaction is alpha-Neu5Ac-(2-&gt;3)-beta-D-Gal-(1-&gt;4)-beta-D-GlcNAc-(1-&gt;3)-beta-D-Gal-(1-&gt;4)-D-Glc + GDP-beta-L-fucose = alpha-Neu5Ac-(2-&gt;3)-beta-D-Gal-(1-&gt;4)-[alpha-L-Fuc-(1-&gt;3)]-beta-D-GlcNAc-(1-&gt;3)-beta-D-Gal-(1-&gt;4)-D-Glc + GDP + H(+). The enzyme catalyses alpha-Neu5Ac-(2-&gt;3)-beta-D-Gal-(1-&gt;4)-beta-D-GlcNAc-(1-&gt;3)-beta-D-Gal-(1-&gt;4)-[alpha-L-Fuc-(1-&gt;3)]-beta-D-GlcNAc-(1-&gt;3)-beta-D-Gal-(1-&gt;4)-beta-D-GlcNAc + GDP-beta-L-fucose = alpha-Neu5Ac-(2-&gt;3)-beta-D-Gal-(1-&gt;4)-[alpha-L-Fuc-(1-&gt;3)]-beta-D-GlcNAc-(1-&gt;3)-beta-D-Gal-(1-&gt;4)-[alpha-L-Fuc-(1-&gt;3)]-beta-D-GlcNAc-(1-&gt;3)-beta-D-Gal-(1-&gt;4)-beta-D-GlcNAc + GDP + H(+). It carries out the reaction alpha-Neu5Ac-(2-&gt;3)-beta-D-Gal-(1-&gt;4)-beta-D-GlcNAc-(1-&gt;3)-beta-D-Gal-(1-&gt;4)-beta-D-GlcNAc-(1-&gt;3)-beta-D-Gal-(1-&gt;4)-beta-D-GlcNAc + GDP-beta-L-fucose = alpha-Neu5Ac-(2-&gt;3)-beta-D-Gal-(1-&gt;4)-[alpha-L-Fuc-(1-&gt;3)]-beta-D-GlcNAc-(1-&gt;3)-beta-D-Gal-(1-&gt;4)-beta-D-GlcNAc-(1-&gt;3)-beta-D-Gal-(1-&gt;4)-beta-D-GlcNAc + GDP + H(+). The protein operates within protein modification; protein glycosylation. With respect to regulation, inhibited by NaCl. Inhibited by GDP in a concentration dependent manner, with an IC(50) value of 93 uM. Also inhibited by GMP and GTP. Inhibited by N-ethylmaleimide. Activated by poly(ethylene glycol) by enhancing the thermal stability of FUT7. Activated by Mn2+, Ca2+, and Mg2+. Both panosialin A and B inhibit activity with IC(50) values of 4.8 and 5.3 ug/ml, respectively. Inhibited by gallic acid (GA) and (-)-epigallocatechin gallate (EGCG) in a time-dependent and irreversible manner with IC(50) values of 60 and 700 nM, respectively. In terms of biological role, catalyzes the transfer of L-fucose, from a guanosine diphosphate-beta-L-fucose, to the N-acetyl glucosamine (GlcNAc) of a distal alpha2,3 sialylated lactosamine unit of a glycoprotein or a glycolipid-linked sialopolylactosamines chain through an alpha-1,3 glycosidic linkage and participates in the final fucosylation step in the biosynthesis of the sialyl Lewis X (sLe(x)), a carbohydrate involved in cell and matrix adhesion during leukocyte trafficking and fertilization. In vitro, also synthesizes sialyl-dimeric-Lex structures, from VIM-2 structures and both di-fucosylated and trifucosylated structures from mono-fucosylated precursors. However does not catalyze alpha 1-3 fucosylation when an internal alpha 1-3 fucosylation is present in polylactosamine chain and the fucosylation rate of the internal GlcNAc residues is reduced once fucose has been added to the distal GlcNAc. Also catalyzes the transfer of a fucose from GDP-beta-fucose to the 6-sulfated a(2,3)sialylated substrate to produce 6-sulfo sLex mediating significant L-selectin-dependent cell adhesion. Through sialyl-Lewis(x) biosynthesis, can control SELE- and SELP-mediated cell adhesion with leukocytes and allows leukocytes tethering and rolling along the endothelial tissue thereby enabling the leukocytes to accumulate at a site of inflammation. May enhance embryo implantation through sialyl Lewis X (sLeX)-mediated adhesion of embryo cells to endometrium. May affect insulin signaling by up-regulating the phosphorylation and expression of some signaling molecules involved in the insulin-signaling pathway through SLe(x) which is present on the glycans of the INSRR alpha subunit. The protein is Alpha-(1,3)-fucosyltransferase 7 of Mus musculus (Mouse).